The following is a 311-amino-acid chain: Burkholderia TALE-like protein 3 (311 aa).

The stretch at 19–50 is one Cryptic repeat -1 repeat; the sequence is LSPFECLKIEKHSGGADALEFISNKYDALTQV. Residues 51–83 form a Cryptic repeat 0 repeat; the sequence is LSRADILKIACHDCAAHALQAVLDYEQVFRQRG. Core repeat repeat units lie at residues 84 to 116, 117 to 149, 150 to 182, 183 to 215, 216 to 248, and 249 to 281; these read FARADIIKITGNGGGAQALKAVVVHGPTLNECG, FSQADIVRIADNIGGAQALKAVLEHGPTLNERD, YSGADIVKIAGNGGGARALKAVVMHGPTLCESG, YSGADIVKIASNGGGAQALEAVAMHGSTLCERG, YCRTDIAKIAGNGGGAQALKAIVMHGPTLCERG, and YSRTDIVKIADNNGGAQALKAVFEHGPALTQAG. The stretch at 282 to 311 is one Cryptic repeat +1 repeat; sequence RSNEDIVNMAARTGAAGQIRKMAAQLSGRQ.

Belongs to the transcription activator-like effector (TALE) family. Bat subfamily.

In terms of biological role, does not bind DNA, probably because it has too few core repeats. The polypeptide is Burkholderia TALE-like protein 3 (Mycetohabitans rhizoxinica (strain DSM 19002 / CIP 109453 / HKI 454) (Paraburkholderia rhizoxinica)).